A 193-amino-acid chain; its full sequence is E3 ubiquitin-protein ligase RMA2 (193 aa).

The RING-type zinc-finger motif lies at 21–75 (CNICLDQVRDPVVTLCGHLFCWPCIHKWTYASNNSRQRVDQYDHKREPPKCPVCK). The helical; Anchor for type IV membrane protein transmembrane segment at 175–192 (LSRVYLFLLCFMFMCLFL) threads the bilayer.

In terms of assembly, interacts with ERABP1. Barely detected in roots and limited to the root tips. Expressed in leaf hydathodes and in siliques.

It localises to the endoplasmic reticulum membrane. The enzyme catalyses S-ubiquitinyl-[E2 ubiquitin-conjugating enzyme]-L-cysteine + [acceptor protein]-L-lysine = [E2 ubiquitin-conjugating enzyme]-L-cysteine + N(6)-ubiquitinyl-[acceptor protein]-L-lysine.. The protein operates within protein modification; protein ubiquitination. E3 ubiquitin-protein ligase that promotes the ubiquitination and proteasomal degradation of the auxin-binding protein ERABP1. This chain is E3 ubiquitin-protein ligase RMA2 (RMA2), found in Arabidopsis thaliana (Mouse-ear cress).